A 524-amino-acid polypeptide reads, in one-letter code: Probable cytochrome P450 12c1, mitochondrial (524 aa).

Cys-470 is a heme binding site.

Belongs to the cytochrome P450 family. It depends on heme as a cofactor.

The protein localises to the mitochondrion membrane. The chain is Probable cytochrome P450 12c1, mitochondrial (Cyp12c1) from Drosophila melanogaster (Fruit fly).